The sequence spans 234 residues: Interleukin-27 subunit alpha (234 aa).

An N-terminal signal peptide occupies residues 1-28 (MGQVTGDLGWRLSLLLLPLLLVQAGSWG). The N-linked (GlcNAc...) asparagine glycan is linked to asparagine 85. A disordered region spans residues 160–185 (KEEEDKEEEEEEEEEEKKLPLGALGG). Positions 161–174 (EEEDKEEEEEEEEE) are enriched in acidic residues.

This sequence belongs to the IL-6 superfamily. In terms of assembly, heterodimer with EBI3; not disulfide-linked. This heterodimer is known as interleukin IL-27. Post-translationally, O-glycosylated. As to expression, expressed in macrophages and dendritic cells.

The protein localises to the secreted. Its function is as follows. Associates with EBI3 to form the IL-27 interleukin, a heterodimeric cytokine which functions in innate immunity. IL-27 has pro- and anti-inflammatory properties, that can regulate T-helper cell development, suppress T-cell proliferation, stimulate cytotoxic T-cell activity, induce isotype switching in B-cells, and that has diverse effects on innate immune cells. Among its target cells are CD4 T-helper cells which can differentiate in type 1 effector cells (TH1), type 2 effector cells (TH2) and IL17 producing helper T-cells (TH17). It drives rapid clonal expansion of naive but not memory CD4 T-cells. It also strongly synergizes with IL-12 to trigger interferon-gamma/IFN-gamma production of naive CD4 T-cells, binds to the cytokine receptor WSX-1/TCCR which appears to be required but not sufficient for IL-27-mediated signal transduction. IL-27 potentiate the early phase of TH1 response and suppress TH2 and TH17 differentiation. It induces the differentiation of TH1 cells via two distinct pathways, p38 MAPK/TBX21- and ICAM1/ITGAL/ERK-dependent pathways. It also induces STAT1, STAT3, STAT4 and STAT5 phosphorylation and activates TBX21/T-Bet via STAT1 with resulting IL12RB2 up-regulation, an event crucial to TH1 cell commitment. It suppresses the expression of GATA3, the inhibitor TH1 cells development. In CD8 T-cells, it activates STATs as well as GZMB. IL-27 reveals to be a potent inhibitor of TH17 cell development and of IL-17 production. Indeed IL27 alone is also able to inhibit the production of IL17 by CD4 and CD8 T-cells. While IL-27 suppressed the development of pro-inflammatory Th17 cells via STAT1, it inhibits the development of anti-inflammatory inducible regulatory T-cells, iTreg, independently of STAT1. IL-27 also has an effect on cytokine production, it suppresses pro-inflammatory cytokine production such as IL2, IL4, IL5 and IL6 and activates suppressors of cytokine signaling such as SOCS1 and SOCS3. Apart from suppression of cytokine production, IL-27 also antagonizes the effects of some cytokines such as IL6 through direct effects on T-cells. Another important role of IL-27 is its antitumor activity as well as its antiangiogenic activity with activation of production of antiangiogenic chemokines such as IP-10/CXCL10 and MIG/CXCL9. The chain is Interleukin-27 subunit alpha (Il27) from Mus musculus (Mouse).